Reading from the N-terminus, the 1208-residue chain is DNA-directed RNA polymerase subunit beta (1208 aa).

The protein belongs to the RNA polymerase beta chain family. The RNAP catalytic core consists of 2 alpha, 1 beta, 1 beta' and 1 omega subunit. When a sigma factor is associated with the core the holoenzyme is formed, which can initiate transcription.

The catalysed reaction is RNA(n) + a ribonucleoside 5'-triphosphate = RNA(n+1) + diphosphate. DNA-dependent RNA polymerase catalyzes the transcription of DNA into RNA using the four ribonucleoside triphosphates as substrates. The polypeptide is DNA-directed RNA polymerase subunit beta (Enterococcus faecium (Streptococcus faecium)).